Consider the following 336-residue polypeptide: Adenylate isopentenyltransferase 3, chloroplastic (336 aa).

Residues 1-55 (MIMKISMAMCKQPLPPSPTLDFPPARFGPNMLTLNPYGPKDKVVVIMGATGTGKS) constitute a chloroplast transit peptide. 48–55 (GATGTGKS) serves as a coordination point for ATP. Cysteine 333 carries the cysteine methyl ester modification. Cysteine 333 is lipidated: S-farnesyl cysteine. Positions 334–336 (LVA) are cleaved as a propeptide — removed in mature form.

Belongs to the IPP transferase family. Farnesylated. As to expression, expressed the phloem companion cells.

Its subcellular location is the plastid. The protein localises to the chloroplast. It is found in the nucleus membrane. The protein resides in the cytoplasm. It catalyses the reaction dimethylallyl diphosphate + ADP = N(6)-(dimethylallyl)adenosine 5'-diphosphate + diphosphate. The enzyme catalyses dimethylallyl diphosphate + ATP = N(6)-(dimethylallyl)adenosine 5'-triphosphate + diphosphate. Involved in cytokinin biosynthesis. Catalyzes the transfer of an isopentenyl group from dimethylallyl diphosphate (DMAPP) to ATP and ADP. The protein is Adenylate isopentenyltransferase 3, chloroplastic (IPT3) of Arabidopsis thaliana (Mouse-ear cress).